A 311-amino-acid chain; its full sequence is Ornithine carbamoyltransferase (311 aa).

Carbamoyl phosphate contacts are provided by residues 54 to 57 (STRT), Q81, R105, and 132 to 135 (HPCQ). L-ornithine contacts are provided by residues N164, D228, and 232–233 (SM). Carbamoyl phosphate-binding positions include 268-269 (CL) and R296.

Belongs to the aspartate/ornithine carbamoyltransferase superfamily. OTCase family.

It is found in the cytoplasm. The enzyme catalyses carbamoyl phosphate + L-ornithine = L-citrulline + phosphate + H(+). The protein operates within amino-acid biosynthesis; L-arginine biosynthesis; L-arginine from L-ornithine and carbamoyl phosphate: step 1/3. Its function is as follows. Reversibly catalyzes the transfer of the carbamoyl group from carbamoyl phosphate (CP) to the N(epsilon) atom of ornithine (ORN) to produce L-citrulline. The chain is Ornithine carbamoyltransferase from Renibacterium salmoninarum (strain ATCC 33209 / DSM 20767 / JCM 11484 / NBRC 15589 / NCIMB 2235).